The following is a 203-amino-acid chain: CASP-like protein 1B1 (203 aa).

At 1–24 the chain is on the cytoplasmic side; the sequence is MALVNAEKPEVGSSPSSLGPRNKS. The helical transmembrane segment at 25–45 threads the bilayer; the sequence is WVLLMLRFVAFLATAAATIVM. At 46–76 the chain is on the extracellular side; that stretch reads AANRETKTFVVATIGSTPIKATVTAKFQHTP. Residues 77–97 form a helical membrane-spanning segment; the sequence is AFVFFVIANGMGSIHNLVMIA. Topologically, residues 98–114 are cytoplasmic; it reads GDTFVRKFDYKGLRWVT. Residues 115-135 form a helical membrane-spanning segment; that stretch reads VAILDMLTAALISGGVNAAVF. The Extracellular portion of the chain corresponds to 136 to 165; sequence MAELGKNGNSHAKWNKICDRFGSFCDHGGA. Residues 166–186 traverse the membrane as a helical segment; sequence AIIASFIGLLLMLVISIISII. Topologically, residues 187 to 203 are cytoplasmic; it reads KLLKPKSPLVDSHVLAP.

The protein belongs to the Casparian strip membrane proteins (CASP) family. As to quaternary structure, homodimer and heterodimers.

Its subcellular location is the cell membrane. The chain is CASP-like protein 1B1 from Ricinus communis (Castor bean).